The primary structure comprises 158 residues: Endoribonuclease YbeY (158 aa).

Zn(2+)-binding residues include His-122, His-126, and His-132.

This sequence belongs to the endoribonuclease YbeY family. Requires Zn(2+) as cofactor.

Its subcellular location is the cytoplasm. In terms of biological role, single strand-specific metallo-endoribonuclease involved in late-stage 70S ribosome quality control and in maturation of the 3' terminus of the 16S rRNA. This chain is Endoribonuclease YbeY, found in Bacillus licheniformis (strain ATCC 14580 / DSM 13 / JCM 2505 / CCUG 7422 / NBRC 12200 / NCIMB 9375 / NCTC 10341 / NRRL NRS-1264 / Gibson 46).